We begin with the raw amino-acid sequence, 157 residues long: Crossover junction endodeoxyribonuclease RuvC (157 aa).

Active-site residues include Asp7, Glu67, and Asp139. The Mg(2+) site is built by Asp7, Glu67, and Asp139.

The protein belongs to the RuvC family. Homodimer which binds Holliday junction (HJ) DNA. The HJ becomes 2-fold symmetrical on binding to RuvC with unstacked arms; it has a different conformation from HJ DNA in complex with RuvA. In the full resolvosome a probable DNA-RuvA(4)-RuvB(12)-RuvC(2) complex forms which resolves the HJ. The cofactor is Mg(2+).

The protein localises to the cytoplasm. The catalysed reaction is Endonucleolytic cleavage at a junction such as a reciprocal single-stranded crossover between two homologous DNA duplexes (Holliday junction).. In terms of biological role, the RuvA-RuvB-RuvC complex processes Holliday junction (HJ) DNA during genetic recombination and DNA repair. Endonuclease that resolves HJ intermediates. Cleaves cruciform DNA by making single-stranded nicks across the HJ at symmetrical positions within the homologous arms, yielding a 5'-phosphate and a 3'-hydroxyl group; requires a central core of homology in the junction. The consensus cleavage sequence is 5'-(A/T)TT(C/G)-3'. Cleavage occurs on the 3'-side of the TT dinucleotide at the point of strand exchange. HJ branch migration catalyzed by RuvA-RuvB allows RuvC to scan DNA until it finds its consensus sequence, where it cleaves and resolves the cruciform DNA. In Prochlorococcus marinus subsp. pastoris (strain CCMP1986 / NIES-2087 / MED4), this protein is Crossover junction endodeoxyribonuclease RuvC.